We begin with the raw amino-acid sequence, 132 residues long: Fluoride-specific ion channel FluC 2 (132 aa).

Transmembrane regions (helical) follow at residues 12 to 32 (LTEL…RWQL), 41 to 61 (LLVN…PVAP), 65 to 85 (LLVG…MLAA), and 96 to 116 (AALG…ALGF). The Na(+) site is built by Gly-73 and Thr-76.

The protein belongs to the fluoride channel Fluc/FEX (TC 1.A.43) family.

It is found in the cell inner membrane. It carries out the reaction fluoride(in) = fluoride(out). Its activity is regulated as follows. Na(+) is not transported, but it plays an essential structural role and its presence is essential for fluoride channel function. Its function is as follows. Fluoride-specific ion channel. Important for reducing fluoride concentration in the cell, thus reducing its toxicity. The protein is Fluoride-specific ion channel FluC 2 of Parasynechococcus marenigrum (strain WH8102).